The sequence spans 245 residues: MKVTLLIPARYGSSRFPGKPLAPINGKPMIQHVYERASLAKGLDSIYVATDDDRIKDAVESFGGKVVMTSPDAASGTDRINDAIALLGLNDDDLVINLQGDQPLIDPISIEQIISLFERHPGEFEMATLGFEIVDKRELDDPMHVKMVFDNDHNALYFSRSRIPFGRDTNDYPVYKHLGVYAYTKRFVNAFAKLPLGRLEDLEKLEQLRALEYGHKIKIAISAFDSPEVDTPEDIRKCELRLAVD.

This sequence belongs to the KdsB family.

The protein localises to the cytoplasm. The catalysed reaction is 8-amino-3,8-dideoxy-alpha-D-manno-octulosonate + CTP = CMP-8-amino-3,8-dideoxy-alpha-D-manno-oct-2-ulosonate + diphosphate. The protein operates within bacterial outer membrane biogenesis; lipopolysaccharide biosynthesis. In terms of biological role, activates KDO8N (a required 8-carbon sugar) for incorporation into bacterial lipopolysaccharide in the Shewanella genus. This chain is 8-amino-3,8-dideoxy-manno-octulosonate cytidylyltransferase, found in Shewanella frigidimarina (strain NCIMB 400).